The following is a 181-amino-acid chain: Thioredoxin-like protein CITRX1, chloroplastic (181 aa).

Residues 1-20 (MQAATLSFHPSAPPPQTSAC) form a disordered region. The N-terminal 70 residues, 1–70 (MQAATLSFHP…PAVATGKYVR (70 aa)), are a transit peptide targeting the chloroplast. A Thioredoxin domain is found at 71 to 181 (EDYLVKKVSA…MMRDIINNDL (111 aa)). Catalysis depends on nucleophile residues cysteine 104 and cysteine 107. Cysteine 104 and cysteine 107 are oxidised to a cystine.

This sequence belongs to the thioredoxin family. Plant CITRX-type subfamily.

It localises to the plastid. The protein resides in the chloroplast. Its function is as follows. Probable thiol-disulfide oxidoreductase that may play a role in proper chloroplast development. This Nicotiana benthamiana protein is Thioredoxin-like protein CITRX1, chloroplastic.